The sequence spans 493 residues: Cytochrome P450 2E1 (493 aa).

298–303 is a binding site for substrate; it reads FAGTET. Position 437 (Cys-437) interacts with heme.

It belongs to the cytochrome P450 family. In terms of assembly, interacts with chaperones HSP70 and HSP90; this interaction is required for initial targeting to mitochondria. The cofactor is heme.

Its subcellular location is the endoplasmic reticulum membrane. It is found in the microsome membrane. The protein resides in the mitochondrion inner membrane. It carries out the reaction an organic molecule + reduced [NADPH--hemoprotein reductase] + O2 = an alcohol + oxidized [NADPH--hemoprotein reductase] + H2O + H(+). The enzyme catalyses (5Z,8Z,11Z)-eicosatrienoate + reduced [NADPH--hemoprotein reductase] + O2 = 19-hydroxy-(5Z,8Z,11Z)-eicosatrienoate + oxidized [NADPH--hemoprotein reductase] + H2O + H(+). It catalyses the reaction (5Z,8Z,11Z,14Z,17Z)-eicosapentaenoate + reduced [NADPH--hemoprotein reductase] + O2 = 19-hydroxy-(5Z,8Z,11Z,14Z,17Z)-eicosapentaenoate + oxidized [NADPH--hemoprotein reductase] + H2O + H(+). The catalysed reaction is (4Z,7Z,10Z,13Z,16Z,19Z)-docosahexaenoate + reduced [NADPH--hemoprotein reductase] + O2 = 21-hydroxy-(4Z,7Z,10Z,13Z,16Z,19Z)-docosahexaenoate + oxidized [NADPH--hemoprotein reductase] + H2O + H(+). It carries out the reaction dodecanoate + reduced [NADPH--hemoprotein reductase] + O2 = 11-hydroxydodecanoate + oxidized [NADPH--hemoprotein reductase] + H2O + H(+). The enzyme catalyses tetradecanoate + reduced [NADPH--hemoprotein reductase] + O2 = 13-hydroxytetradecanoate + oxidized [NADPH--hemoprotein reductase] + H2O + H(+). It catalyses the reaction 4-nitrophenol + NADPH + O2 + H(+) = 4-nitrocatechol + NADP(+) + H2O. The protein operates within lipid metabolism; fatty acid metabolism. Its activity is regulated as follows. The omega-1 hydroxylase activity is stimulated by cytochrome b5. Functionally, a cytochrome P450 monooxygenase involved in the metabolism of fatty acids. Mechanistically, uses molecular oxygen inserting one oxygen atom into a substrate, and reducing the second into a water molecule, with two electrons provided by NADPH via cytochrome P450 reductase (NADPH--hemoprotein reductase). Catalyzes the hydroxylation of carbon-hydrogen bonds. Hydroxylates fatty acids specifically at the omega-1 position displaying the highest catalytic activity for saturated fatty acids. May be involved in the oxidative metabolism of xenobiotics. This is Cytochrome P450 2E1 from Homo sapiens (Human).